Reading from the N-terminus, the 190-residue chain is Elongation factor P-like protein (190 aa).

This sequence belongs to the elongation factor P family.

The polypeptide is Elongation factor P-like protein (Shigella dysenteriae serotype 1 (strain Sd197)).